The chain runs to 472 residues: Argininosuccinate lyase (472 aa).

Belongs to the lyase 1 family. Argininosuccinate lyase subfamily.

The protein localises to the cytoplasm. The catalysed reaction is 2-(N(omega)-L-arginino)succinate = fumarate + L-arginine. It functions in the pathway amino-acid biosynthesis; L-arginine biosynthesis; L-arginine from L-ornithine and carbamoyl phosphate: step 3/3. The protein is Argininosuccinate lyase of Mycolicibacterium paratuberculosis (strain ATCC BAA-968 / K-10) (Mycobacterium paratuberculosis).